A 505-amino-acid polypeptide reads, in one-letter code: Serine/threonine-protein kinase D (505 aa).

The 263-residue stretch at 9–271 (YEIVKSLGSG…AMYQALHSLI (263 aa)) folds into the Protein kinase domain. ATP is bound by residues 15 to 23 (LGSGGFGDT) and lysine 40. Residue aspartate 136 is the Proton acceptor of the active site. Residues 436–505 (GASATIGGIP…GWIASQLVNF (70 aa)) enclose the SH3b domain.

The protein belongs to the protein kinase superfamily. Ser/Thr protein kinase family.

It catalyses the reaction L-seryl-[protein] + ATP = O-phospho-L-seryl-[protein] + ADP + H(+). It carries out the reaction L-threonyl-[protein] + ATP = O-phospho-L-threonyl-[protein] + ADP + H(+). The chain is Serine/threonine-protein kinase D (spkD) from Synechocystis sp. (strain ATCC 27184 / PCC 6803 / Kazusa).